The primary structure comprises 842 residues: Glucans biosynthesis glucosyltransferase H (842 aa).

A run of 7 helical transmembrane segments spans residues 140 to 160 (ILLL…KTIL), 194 to 214 (ILIL…TALM), 513 to 533 (VFLT…FLAL), 570 to 590 (LFAS…MLIW), 615 to 635 (VLLA…AFLG), 656 to 676 (FMRH…MAWL), and 680 to 700 (FLFW…VSVV).

Belongs to the glycosyltransferase 2 family. OpgH subfamily.

The protein resides in the cell inner membrane. It functions in the pathway glycan metabolism; osmoregulated periplasmic glucan (OPG) biosynthesis. Its function is as follows. Involved in the biosynthesis of osmoregulated periplasmic glucans (OPGs). The chain is Glucans biosynthesis glucosyltransferase H from Citrobacter koseri (strain ATCC BAA-895 / CDC 4225-83 / SGSC4696).